The following is a 366-amino-acid chain: Histidinol-phosphate aminotransferase (366 aa).

Lys-222 is subject to N6-(pyridoxal phosphate)lysine.

It belongs to the class-II pyridoxal-phosphate-dependent aminotransferase family. Histidinol-phosphate aminotransferase subfamily. Homodimer. The cofactor is pyridoxal 5'-phosphate.

It carries out the reaction L-histidinol phosphate + 2-oxoglutarate = 3-(imidazol-4-yl)-2-oxopropyl phosphate + L-glutamate. The protein operates within amino-acid biosynthesis; L-histidine biosynthesis; L-histidine from 5-phospho-alpha-D-ribose 1-diphosphate: step 7/9. This chain is Histidinol-phosphate aminotransferase, found in Lysinibacillus sphaericus (strain C3-41).